The chain runs to 573 residues: Probable pectinesterase/pectinesterase inhibitor 41 (573 aa).

The first 22 residues, 1–22 (MLSLKLFLVTLFLSLQTLFIAS), serve as a signal peptide directing secretion. A pectinesterase inhibitor 41 region spans residues 25 to 184 (LLPSNSSSTI…TKLFSVSLAL (160 aa)). N-linked (GlcNAc...) asparagine glycosylation is found at N29, N119, N173, N264, N268, N281, and N320. Residues 259–557 (VTVNQNGTGN…FTVENFLLGD (299 aa)) form a pectinesterase 41 region. T336 serves as a coordination point for substrate. N353 carries an N-linked (GlcNAc...) asparagine glycan. Residue Q366 participates in substrate binding. Residue D389 is the Proton donor; for pectinesterase activity of the active site. C403 and C423 are oxidised to a cystine. Residue D410 is the Nucleophile; for pectinesterase activity of the active site. N456 and N469 each carry an N-linked (GlcNAc...) asparagine glycan. Substrate-binding residues include R478 and W480. N-linked (GlcNAc...) asparagine glycosylation is found at N520, N541, and N547.

This sequence in the N-terminal section; belongs to the PMEI family. The protein in the C-terminal section; belongs to the pectinesterase family. As to expression, expressed in flowers, siliques, floral stems and rosettes leaves.

The protein resides in the secreted. Its subcellular location is the cell wall. It carries out the reaction [(1-&gt;4)-alpha-D-galacturonosyl methyl ester](n) + n H2O = [(1-&gt;4)-alpha-D-galacturonosyl](n) + n methanol + n H(+). It functions in the pathway glycan metabolism; pectin degradation; 2-dehydro-3-deoxy-D-gluconate from pectin: step 1/5. Acts in the modification of cell walls via demethylesterification of cell wall pectin. In Arabidopsis thaliana (Mouse-ear cress), this protein is Probable pectinesterase/pectinesterase inhibitor 41 (PME41).